Consider the following 157-residue polypeptide: Protein MG115 (157 aa).

The protein belongs to the CinA family.

The polypeptide is Protein MG115 (Mycoplasma genitalium (strain ATCC 33530 / DSM 19775 / NCTC 10195 / G37) (Mycoplasmoides genitalium)).